The following is a 348-amino-acid chain: Elongation factor Ts (348 aa).

Residues 80–83 are involved in Mg(2+) ion dislocation from EF-Tu; the sequence is TDFV.

The protein belongs to the EF-Ts family.

It is found in the cytoplasm. Its function is as follows. Associates with the EF-Tu.GDP complex and induces the exchange of GDP to GTP. It remains bound to the aminoacyl-tRNA.EF-Tu.GTP complex up to the GTP hydrolysis stage on the ribosome. In Streptococcus mutans serotype c (strain ATCC 700610 / UA159), this protein is Elongation factor Ts.